A 131-amino-acid polypeptide reads, in one-letter code: Lysozyme C (131 aa).

The 130-residue stretch at 2 to 131 (KIYEQCELAR…VSQWIKGCKL (130 aa)) folds into the C-type lysozyme domain. 4 disulfide bridges follow: Cys7/Cys129, Cys31/Cys117, Cys66/Cys82, and Cys78/Cys96. Catalysis depends on residues Glu36 and Asp54.

Belongs to the glycosyl hydrolase 22 family. Monomer.

The protein resides in the secreted. The enzyme catalyses Hydrolysis of (1-&gt;4)-beta-linkages between N-acetylmuramic acid and N-acetyl-D-glucosamine residues in a peptidoglycan and between N-acetyl-D-glucosamine residues in chitodextrins.. Lysozymes have primarily a bacteriolytic function; those in tissues and body fluids are associated with the monocyte-macrophage system and enhance the activity of immunoagents. Has strong bacteriolytic activity against M.luteus and V.cholerae, weak bacteriolytic activity against P.aeruginosa and no activity against A.hydrophila. The protein is Lysozyme C (LYZ) of Pelodiscus sinensis (Chinese softshell turtle).